Consider the following 237-residue polypeptide: Cytidylate kinase (237 aa).

Position 15–23 (glycine 15–threonine 23) interacts with ATP.

This sequence belongs to the cytidylate kinase family. Type 1 subfamily.

The protein resides in the cytoplasm. The enzyme catalyses CMP + ATP = CDP + ADP. It catalyses the reaction dCMP + ATP = dCDP + ADP. This Coxiella burnetii (strain RSA 493 / Nine Mile phase I) protein is Cytidylate kinase.